The chain runs to 40 residues: Potassium channel toxin alpha-KTx 12.3 (40 aa).

Disulfide bonds link C2/C5, C10/C31, C16/C36, and C20/C38.

As to expression, expressed by the venom gland.

The protein localises to the secreted. Functionally, inhibits high conductance calcium-activated potassium channels (KCNMA). Inhibits Shaker B potassium channels. This Tityus costatus (Brazilian scorpion) protein is Potassium channel toxin alpha-KTx 12.3.